The sequence spans 398 residues: Probable pectate lyase P56 (398 aa).

The N-terminal stretch at Met-1–Ala-27 is a signal peptide. N-linked (GlcNAc...) asparagine glycosylation occurs at Asn-135. Residues Asp-192, Asp-217, and Asp-221 each contribute to the Ca(2+) site. N-linked (GlcNAc...) asparagine glycosylation is present at Asn-228. Arg-273 is an active-site residue.

It belongs to the polysaccharide lyase 1 family. Ca(2+) serves as cofactor. Expressed in anthers and pollen.

It carries out the reaction Eliminative cleavage of (1-&gt;4)-alpha-D-galacturonan to give oligosaccharides with 4-deoxy-alpha-D-galact-4-enuronosyl groups at their non-reducing ends.. The protein operates within glycan metabolism; pectin degradation; 2-dehydro-3-deoxy-D-gluconate from pectin: step 2/5. Functionally, might be needed during pollen development and tube growth. This chain is Probable pectate lyase P56 (LAT56), found in Solanum lycopersicum (Tomato).